A 601-amino-acid chain; its full sequence is Lanthanide-dependent methanol dehydrogenase (601 aa).

The signal sequence occupies residues 1-21 (MRAVHLLALGAGLAAASPALA). An intrachain disulfide couples C124 to C125. Pyrroloquinoline quinone is bound by residues R130, T174, S189, G190, and G191. E192 contacts La(3+). Cysteines 197 and 256 form a disulfide. W258 is a binding site for pyrroloquinoline quinone. N276, D318, and D320 together coordinate La(3+). D318 acts as the Proton acceptor in catalysis. R345 contacts pyrroloquinoline quinone. An intrachain disulfide couples C408 to C437. Residues W494 and W558 each contribute to the pyrroloquinoline quinone site.

Belongs to the bacterial PQQ dehydrogenase family. In terms of assembly, homodimer. It depends on La(3+) as a cofactor. Nd(3+) is required as a cofactor. The cofactor is pyrroloquinoline quinone.

The protein resides in the periplasm. The enzyme catalyses 2 Fe(III)-[cytochrome cL] + methanol = 2 Fe(II)-[cytochrome cL] + formaldehyde + 2 H(+). Catalyzes the oxidation of methanol to formaldehyde, but only in the presence of lanthanides (Ln). Contributes to methanol metabolism when La(3+) is present in the natural environment of the bacterium, allowing bacterial growth with methanol as carbon and energy source. Thereby is an essential enzyme for Ln-dependent methylotrophy. Uses a specific cytochrome cL (XoxG), encoded by the adjacent gene in the locus, as electron acceptor. Also plays a role in the transcriptional regulation of the mxa and xox1 operons, most likely acting as a lanthanide sensory module. Is also able to oxidize formaldehyde to formate in vitro, but this activity does not occur in vivo. The protein is Lanthanide-dependent methanol dehydrogenase of Methylorubrum extorquens (strain ATCC 14718 / DSM 1338 / JCM 2805 / NCIMB 9133 / AM1) (Methylobacterium extorquens).